A 400-amino-acid chain; its full sequence is Tryptophan synthase beta chain (400 aa).

N6-(pyridoxal phosphate)lysine is present on Lys-90.

This sequence belongs to the TrpB family. Tetramer of two alpha and two beta chains. Pyridoxal 5'-phosphate is required as a cofactor.

The enzyme catalyses (1S,2R)-1-C-(indol-3-yl)glycerol 3-phosphate + L-serine = D-glyceraldehyde 3-phosphate + L-tryptophan + H2O. It functions in the pathway amino-acid biosynthesis; L-tryptophan biosynthesis; L-tryptophan from chorismate: step 5/5. Its function is as follows. The beta subunit is responsible for the synthesis of L-tryptophan from indole and L-serine. The polypeptide is Tryptophan synthase beta chain (Bacillus velezensis (strain DSM 23117 / BGSC 10A6 / LMG 26770 / FZB42) (Bacillus amyloliquefaciens subsp. plantarum)).